A 257-amino-acid polypeptide reads, in one-letter code: Phosphatidylglycerol--prolipoprotein diacylglyceryl transferase (257 aa).

Transmembrane regions (helical) follow at residues 13 to 33 (IGPI…AIGG), 49 to 69 (FLLN…RLMF), 88 to 108 (IYEG…AGLY), 123 to 143 (FAVL…IFNQ), 152 to 172 (FAFG…ILLI), 185 to 202 (GYQF…RGLI), and 223 to 243 (IGFF…AYWM). Position 136 (Arg136) interacts with a 1,2-diacyl-sn-glycero-3-phospho-(1'-sn-glycerol).

It belongs to the Lgt family.

It localises to the cell membrane. It carries out the reaction L-cysteinyl-[prolipoprotein] + a 1,2-diacyl-sn-glycero-3-phospho-(1'-sn-glycerol) = an S-1,2-diacyl-sn-glyceryl-L-cysteinyl-[prolipoprotein] + sn-glycerol 1-phosphate + H(+). It functions in the pathway protein modification; lipoprotein biosynthesis (diacylglyceryl transfer). Catalyzes the transfer of the diacylglyceryl group from phosphatidylglycerol to the sulfhydryl group of the N-terminal cysteine of a prolipoprotein, the first step in the formation of mature lipoproteins. The sequence is that of Phosphatidylglycerol--prolipoprotein diacylglyceryl transferase from Thermoanaerobacter pseudethanolicus (strain ATCC 33223 / 39E) (Clostridium thermohydrosulfuricum).